The primary structure comprises 310 residues: tRNA dimethylallyltransferase (310 aa).

13–20 (GPTASGKT) is a binding site for ATP. Residue 15-20 (TASGKT) participates in substrate binding. 4 interaction with substrate tRNA regions span residues 38 to 41 (DSAL), 162 to 166 (QRLSR), 243 to 248 (RCVGYR), and 276 to 283 (KRQITWLR).

Belongs to the IPP transferase family. Monomer. It depends on Mg(2+) as a cofactor.

It carries out the reaction adenosine(37) in tRNA + dimethylallyl diphosphate = N(6)-dimethylallyladenosine(37) in tRNA + diphosphate. Its function is as follows. Catalyzes the transfer of a dimethylallyl group onto the adenine at position 37 in tRNAs that read codons beginning with uridine, leading to the formation of N6-(dimethylallyl)adenosine (i(6)A). The chain is tRNA dimethylallyltransferase from Aliivibrio fischeri (strain MJ11) (Vibrio fischeri).